The following is a 104-amino-acid chain: Large ribosomal subunit protein uL23 (104 aa).

It belongs to the universal ribosomal protein uL23 family. Part of the 50S ribosomal subunit. Contacts protein L29, and trigger factor when it is bound to the ribosome.

One of the early assembly proteins it binds 23S rRNA. One of the proteins that surrounds the polypeptide exit tunnel on the outside of the ribosome. Forms the main docking site for trigger factor binding to the ribosome. The protein is Large ribosomal subunit protein uL23 of Cupriavidus metallidurans (strain ATCC 43123 / DSM 2839 / NBRC 102507 / CH34) (Ralstonia metallidurans).